Here is a 2465-residue protein sequence, read N- to C-terminus: Serine/threonine-protein kinase TOR (2465 aa).

HEAT repeat units lie at residues 184–221 (VHVP…VIEK), 271–308 (SRYR…FLRD), 348–389 (AELV…AMGP), 549–587 (RLVE…FDDF), 588–625 (LAQA…KNPA), 717–755 (QYLP…STGY), 761–799 (NEYP…LDPH), 888–926 (PYLP…IVRQ), 981–1018 (MYIL…VFGG), 1022–1059 (EHMH…TVQV), and 1061–1098 (THVS…ALGE). The tract at residues 1158 to 1191 (DFGGVPSEEADETQRQPRSHQVNDVRLRSAGEAS) is disordered. Positions 1297–1877 (LLGALAEKCR…MYPLLVACKS (581 aa)) constitute an FAT domain. The PI3K/PI4K catalytic domain occupies 2051–2369 (FVPQLIVITS…PPRGAREREL (319 aa)). Residues 2057–2063 (VITSKQR) form a G-loop region. The tract at residues 2230 to 2238 (GLGDRHPSN) is catalytic loop. An activation loop region spans residues 2250-2275 (HIDFGDCFEASMNREKFPEKVPFRLT). The interval 2401 to 2431 (RDFSSGSSLSGAGSSTQHGNEHLASGDTREV) is disordered. Residues 2404–2415 (SSGSSLSGAGSS) show a composition bias toward low complexity. An FATC domain is found at 2433 to 2465 (PGLSVKVQVQRLILQATSHENLCQNYVGWCPFW).

It belongs to the PI3/PI4-kinase family. In terms of assembly, the target of rapamycin complex 1 (TORC1) is composed of at least RAPTOR, LST8 and TOR.

It catalyses the reaction L-seryl-[protein] + ATP = O-phospho-L-seryl-[protein] + ADP + H(+). The catalysed reaction is L-threonyl-[protein] + ATP = O-phospho-L-threonyl-[protein] + ADP + H(+). With respect to regulation, insensitive to inhibition by rapamycin. In terms of biological role, component of TORC1 complex, which is an essential cell growth regulator that controls plant development. Acts through the phosphorylation of downstream effectors that are recruited by the binding partner RAPTOR. Acts by activating transcription, protein synthesis and ribosome biogenesis, and inhibiting mRNA degradation and autophagy. The chain is Serine/threonine-protein kinase TOR from Oryza sativa subsp. japonica (Rice).